The sequence spans 346 residues: NADH-ubiquinone oxidoreductase chain 2 (346 aa).

11 consecutive transmembrane segments (helical) span residues 3 to 23 (PLILTIILMTVFLGTMIVMAS), 25 to 45 (HWLMIWIGFEMNLLAIIPILM), 59 to 79 (YFLTQATASMLLMMAIIINLM), 96 to 116 (IIMTLALAMKLGLTPFHFWVP), 122 to 142 (ISLTSGLILLTWQKLAPMSIL), 149 to 169 (INLNILLTMAVLSILVGGWGG), 178 to 198 (IMAYSSIAHMGWMAAILVYNP), 200 to 220 (LTMLNMLIYIMMTLTMFMLFI), 237 to 257 (APLITTLILITLLSMGGLPPL), 274 to 294 (SSIILPTLMAIMALLNLYFYM), and 322 to 342 (ITLLPPLIIASSLLLPLTPML).

The protein belongs to the complex I subunit 2 family. Core subunit of respiratory chain NADH dehydrogenase (Complex I) which is composed of 45 different subunits. Interacts with TMEM242.

Its subcellular location is the mitochondrion inner membrane. The catalysed reaction is a ubiquinone + NADH + 5 H(+)(in) = a ubiquinol + NAD(+) + 4 H(+)(out). In terms of biological role, core subunit of the mitochondrial membrane respiratory chain NADH dehydrogenase (Complex I) which catalyzes electron transfer from NADH through the respiratory chain, using ubiquinone as an electron acceptor. Essential for the catalytic activity and assembly of complex I. The sequence is that of NADH-ubiquinone oxidoreductase chain 2 from Equus asinus (Donkey).